Here is a 446-residue protein sequence, read N- to C-terminus: Keratin, type I cytoskeletal 25 (446 aa).

A head region spans residues M1–N74. Positions E75–W110 are coil 1A. The 316-residue stretch at E75–C390 folds into the IF rod domain. Residues Y111–I132 form a linker 1 region. A coil 1B region spans residues I133–L224. The segment at Q225–L247 is linker 12. The coil 2 stretch occupies residues L248–D386. The tract at residues E387–N446 is tail. A Phosphoserine modification is found at S438.

The protein belongs to the intermediate filament family. Heterodimer of a type I and a type II keratin. Heterodimer with type II keratin KRT5 leading to the formation of keratin intermediate filament (KIF) network. Interacts with KRT6A to form filaments.

Its subcellular location is the cytoplasm. Functionally, essential for the proper assembly of type I and type II keratin protein complexes and formation of keratin intermediate filaments in the inner root sheath (irs). Plays a role in the cytoskeleton organization. The sequence is that of Keratin, type I cytoskeletal 25 from Mus musculus (Mouse).